Consider the following 518-residue polypeptide: Filamentous growth regulator 15 (518 aa).

Over residues 1–41 the composition is skewed to polar residues; it reads MESTLSVSDEKLTNSSTALNNCGDNKESSQVLTTANTTTDN. Disordered stretches follow at residues 1-63, 75-101, and 261-307; these read MEST…SKER, VDPN…DHGK, and KSRS…KQHR. Low complexity predominate over residues 42–52; that stretch reads QQVQPKSQHQQ. Residues 77–95 are compositionally biased toward polar residues; sequence PNQQSKNTVSDSVQDTTGV. Residues 262 to 274 show a composition bias toward basic residues; that stretch reads SRSRSKVTKKRKV. The segment covering 283-298 has biased composition (low complexity); that stretch reads SNTATATTSVTTPDAN. The C2H2-type zinc-finger motif lies at 374-406; the sequence is HECQLPSAEEPHKLCLRRFSRKYELIRHQETVH. A disordered region spans residues 492–518; that stretch reads RKSSGDDTNYMETSDLESGEEEVTFNK. Residues 505-518 show a composition bias toward acidic residues; it reads SDLESGEEEVTFNK.

Its subcellular location is the nucleus. Functionally, probable transcription factor involved in the regulation of filamentous growth. The chain is Filamentous growth regulator 15 (FGR15) from Candida albicans (strain SC5314 / ATCC MYA-2876) (Yeast).